Reading from the N-terminus, the 495-residue chain is Cytochrome P450 monooxygenase 64 (495 aa).

The helical transmembrane segment at 2-22 (FLQIVTSVLATGLLYALISVL) threads the bilayer. 2 N-linked (GlcNAc...) asparagine glycosylation sites follow: asparagine 25 and asparagine 198. Cysteine 428 contributes to the heme binding site.

The protein belongs to the cytochrome P450 family. Heme is required as a cofactor.

It is found in the membrane. It participates in secondary metabolite biosynthesis. Its function is as follows. Cytochrome P450 monooxygenase that is able to use 4-ethoxybenzoic acid as a substrate for oxidation. In Postia placenta (strain ATCC 44394 / Madison 698-R) (Brown rot fungus), this protein is Cytochrome P450 monooxygenase 64.